The chain runs to 671 residues: MIDIDDVAAINPELVQLLPLRPKDSLPLQENVTIPKQKRKSVNSKIPGPKEGLRSRSTRISTVSEVRIPAQENEMEVELPVSTNSRKPFPIHTGHPRPSCSTVTELPLLMISEEAEEQAHSTRSTSSANPGNSVRRKSCIVKEMEKMKNKREEKRAQNSEIRIKRAQEYDNSFPNWEFARMIKEFRVTMDCNPLTVTDPIEEHRICVCVRKRPLNKQELAKKEIDVISVPSKCLLLVHEPKLKVDLTKYLENQAFCFDFAFDETASNEVVYRFTARPLVQTIFEGGKATCFAYGQTGSGKTHTMGGDLSGKSQNASKGIYAMASRDVFLLKNQPRYRSLNLEVYVTFFEIYNGKVFELLNKKAKLRVLEDSKQQVQVVGLQEYLVTCADDVIKMINMGSACRTSGQTFANSNSSRSHACFQILLRAKGRLHGKFSLVDLAGNERGADTSSADRQTRMEGAEINKSLLALKESIRALGQNKAHTPFRESKLTQVLRDSFIGENSRTCMIAMISPGISSCEYTLNTLRYADRVKELSPHSGPSGEQAVQMETEEMDASSHGASLTGNEEEELSSQMSSFNEAMTQIRELEERAMEELREIIQQGPSWLELSEMTDQPDYDLETFVNKAESALTQQAKQAKHFSALQEVIKALRLAMQLEEQASKQINSKKRHQ.

Positions 1-200 (MIDIDDVAAI…CNPLTVTDPI (200 aa)) are globular. Positions 37 to 58 (QKRKSVNSKIPGPKEGLRSRST) are disordered. Serine 41 bears the Phosphoserine; by AURKB mark. The short motif at 44–47 (SKIP) is the Microtubule tip localization signal element. 7 positions are modified to phosphoserine: serine 55, serine 57, serine 61, serine 112, serine 121, serine 133, and serine 138. Positions 115–138 (AEEQAHSTRSTSSANPGNSVRRKS) are disordered. The span at 121-132 (STRSTSSANPGN) shows a compositional bias: polar residues. The tract at residues 153-184 (EKRAQNSEIRIKRAQEYDNSFPNWEFARMIKE) is negative regulator of microtubule-binding. The Kinesin motor domain maps to 204 to 534 (RICVCVRKRP…LRYADRVKEL (331 aa)). Residues arginine 210 and 294-301 (GQTGSGKT) contribute to the ATP site. Serine 465 is subject to Phosphoserine. Residues 533-568 (ELSPHSGPSGEQAVQMETEEMDASSHGASLTGNEEE) form a disordered region. A coiled-coil region spans residues 566-601 (EEEELSSQMSSFNEAMTQIRELEERAMEELREIIQQ). Serine 576 bears the Phosphoserine mark.

Belongs to the TRAFAC class myosin-kinesin ATPase superfamily. Kinesin family. MCAK/KIF2 subfamily. In terms of assembly, interacts with CENPH. Interacts with MTUS2/TIP150; the interaction is direct. Interacts with MAPRE1; the interaction is direct, regulated by phosphorylation and is probably required for targeting to growing microtubule plus ends. Interacts with KIF18B at microtubule tips; this interaction increases the affinity of both partners for microtubule plus ends and is required for robust microtubule depolymerization. Phosphorylation by AURKA or AURKB strongly reduces KIF18B-binding. Post-translationally, phosphorylation by AURKB, regulates association with centromeres and kinetochores and the microtubule depolymerization activity. Ubiquitinated. Testis. Localized to the meiotically active cells of the seminiferous epithelia in the testis.

It localises to the cytoplasm. It is found in the cytoskeleton. The protein resides in the nucleus. Its subcellular location is the chromosome. The protein localises to the centromere. It localises to the kinetochore. Functionally, in complex with KIF18B, constitutes the major microtubule plus-end depolymerizing activity in mitotic cells. Regulates the turnover of microtubules at the kinetochore and functions in chromosome segregation during mitosis. Plays a role in chromosome congression and is required for the lateral to end-on conversion of the chromosome-microtubule attachment. This chain is Kinesin-like protein KIF2C (Kif2c), found in Rattus norvegicus (Rat).